We begin with the raw amino-acid sequence, 460 residues long: NADH-ubiquinone oxidoreductase chain 4 (460 aa).

13 helical membrane passes run 20–42 (SKWL…LTWL), 61–81 (PLST…ILAS), 94–113 (RMYI…AFGA), 114–134 (TKII…LIII), 148–168 (TYFL…LLLL), 195–215 (IWWA…GMHL), 225–245 (PVAG…YGMM), 258–278 (LAYP…LVCL), 285–304 (SLIA…GILI), 308–330 (WGFT…LFCL), 351–371 (MVLP…LALP), 380–400 (LMII…TGMG), and 436–456 (LLMT…ELMW).

It belongs to the complex I subunit 4 family. In terms of assembly, core subunit of respiratory chain NADH dehydrogenase (Complex I) which is composed of 45 different subunits.

It localises to the mitochondrion inner membrane. It catalyses the reaction a ubiquinone + NADH + 5 H(+)(in) = a ubiquinol + NAD(+) + 4 H(+)(out). Core subunit of the mitochondrial membrane respiratory chain NADH dehydrogenase (Complex I) which catalyzes electron transfer from NADH through the respiratory chain, using ubiquinone as an electron acceptor. Essential for the catalytic activity and assembly of complex I. This is NADH-ubiquinone oxidoreductase chain 4 (mt-nd4) from Danio rerio (Zebrafish).